We begin with the raw amino-acid sequence, 477 residues long: Kinesin-like protein KIN-1 (477 aa).

Positions 3-330 (NVTVCVRFRP…VRFGTRTKLI (328 aa)) constitute a Kinesin motor domain. 86–93 (GQTGAGKT) contacts ATP. Residues 402–451 (QDAASQEVSLLTQAVEELKETVEELTDENERLRGELELAQEAAAAAAAAR) are a coiled coil.

Belongs to the TRAFAC class myosin-kinesin ATPase superfamily. Kinesin family. KIN-1 subfamily. In terms of tissue distribution, widely expressed. Expressed in young roots and leaves, in mature roots, culm, sheath and leaves, and in panicles at various developmental stages. Strongest expression is detected in panicles. In the panicle, expression is detected in anthers, glumme, lemma and palea. In the spikelet, expression is detected in both microsporocyte and the anther walls.

It localises to the cytoplasm. Kinesin-like motor protein that exhibits microtubule-stimulated ATPase activity. Plays an essential role in male meiotic chromosomal dynamics, male gametogenesis and anther dehiscence. May play a minor and nonessential role in regulating meiotic spindle formation. The polypeptide is Kinesin-like protein KIN-1 (Oryza sativa subsp. japonica (Rice)).